A 426-amino-acid polypeptide reads, in one-letter code: Putative FBD-associated F-box protein At5g53635 (426 aa).

An F-box domain is found at 1 to 45 (MISQLPDPLICHILSHLPIKDLVTTRVLSTRWRSLWLWLPCLELN). An FBD domain is found at 353-405 (MIQFGSSLVPECLLSSLEFVDIRIPFRGHLEVMKLVRYFLENSAILKKLSLDH).

The polypeptide is Putative FBD-associated F-box protein At5g53635 (Arabidopsis thaliana (Mouse-ear cress)).